We begin with the raw amino-acid sequence, 453 residues long: Bifunctional protein GlmU (453 aa).

Positions Met1–Arg226 are pyrophosphorylase. Residues Leu8–Gly11, Lys22, Gln73, Gly78–Thr79, Tyr100–Asp102, Gly137, Glu151, Asn166, and Asn224 contribute to the UDP-N-acetyl-alpha-D-glucosamine site. Residue Asp102 coordinates Mg(2+). Asn224 contributes to the Mg(2+) binding site. A linker region spans residues Ile227–Gln247. The interval Gly248–Lys453 is N-acetyltransferase. UDP-N-acetyl-alpha-D-glucosamine is bound by residues Arg330 and Lys348. His360 serves as the catalytic Proton acceptor. Positions 363 and 374 each coordinate UDP-N-acetyl-alpha-D-glucosamine. Acetyl-CoA contacts are provided by residues Ala377, Asn383 to Tyr384, Ser402, Ala420, and Arg437.

This sequence in the N-terminal section; belongs to the N-acetylglucosamine-1-phosphate uridyltransferase family. The protein in the C-terminal section; belongs to the transferase hexapeptide repeat family. As to quaternary structure, homotrimer. Requires Mg(2+) as cofactor.

It is found in the cytoplasm. The enzyme catalyses alpha-D-glucosamine 1-phosphate + acetyl-CoA = N-acetyl-alpha-D-glucosamine 1-phosphate + CoA + H(+). It catalyses the reaction N-acetyl-alpha-D-glucosamine 1-phosphate + UTP + H(+) = UDP-N-acetyl-alpha-D-glucosamine + diphosphate. It participates in nucleotide-sugar biosynthesis; UDP-N-acetyl-alpha-D-glucosamine biosynthesis; N-acetyl-alpha-D-glucosamine 1-phosphate from alpha-D-glucosamine 6-phosphate (route II): step 2/2. It functions in the pathway nucleotide-sugar biosynthesis; UDP-N-acetyl-alpha-D-glucosamine biosynthesis; UDP-N-acetyl-alpha-D-glucosamine from N-acetyl-alpha-D-glucosamine 1-phosphate: step 1/1. Its pathway is bacterial outer membrane biogenesis; LPS lipid A biosynthesis. Functionally, catalyzes the last two sequential reactions in the de novo biosynthetic pathway for UDP-N-acetylglucosamine (UDP-GlcNAc). The C-terminal domain catalyzes the transfer of acetyl group from acetyl coenzyme A to glucosamine-1-phosphate (GlcN-1-P) to produce N-acetylglucosamine-1-phosphate (GlcNAc-1-P), which is converted into UDP-GlcNAc by the transfer of uridine 5-monophosphate (from uridine 5-triphosphate), a reaction catalyzed by the N-terminal domain. The protein is Bifunctional protein GlmU of Vibrio cholerae serotype O1 (strain ATCC 39541 / Classical Ogawa 395 / O395).